A 33-amino-acid chain; its full sequence is uncharacterized protein (33 aa).

To E.coli ylcH.

This is an uncharacterized protein from Enterobacteria phage 82 (Bacteriophage 82).